Reading from the N-terminus, the 380-residue chain is Outer membrane protein assembly factor BamB (380 aa).

The N-terminal stretch at 1 to 18 (MVQWKHAALLALALAVVG) is a signal peptide. Cys19 is lipidated: N-palmitoyl cysteine. Cys19 is lipidated: S-diacylglycerol cysteine.

This sequence belongs to the BamB family. As to quaternary structure, part of the Bam complex.

It localises to the cell outer membrane. Its function is as follows. Part of the outer membrane protein assembly complex, which is involved in assembly and insertion of beta-barrel proteins into the outer membrane. The sequence is that of Outer membrane protein assembly factor BamB from Pseudomonas aeruginosa (strain ATCC 15692 / DSM 22644 / CIP 104116 / JCM 14847 / LMG 12228 / 1C / PRS 101 / PAO1).